A 92-amino-acid chain; its full sequence is Signal recognition particle 19 kDa protein (92 aa).

The protein belongs to the SRP19 family. Part of the signal recognition particle protein translocation system, which is composed of SRP and FtsY. Archaeal SRP consists of a 7S RNA molecule of 300 nucleotides and two protein subunits: SRP54 and SRP19.

The protein localises to the cytoplasm. Its function is as follows. Involved in targeting and insertion of nascent membrane proteins into the cytoplasmic membrane. Binds directly to 7S RNA and mediates binding of the 54 kDa subunit of the SRP. This is Signal recognition particle 19 kDa protein from Halorubrum lacusprofundi (strain ATCC 49239 / DSM 5036 / JCM 8891 / ACAM 34).